Reading from the N-terminus, the 306-residue chain is Polyphosphate kinase PPK2B (306 aa).

This sequence belongs to the polyphosphate kinase 2 (PPK2) family. Class I subfamily. As to quaternary structure, homotetramer. It depends on Mn(2+) as a cofactor.

The catalysed reaction is [phosphate](n) + ATP = [phosphate](n+1) + ADP. It catalyses the reaction [phosphate](n) + GTP = [phosphate](n+1) + GDP. Functionally, catalyzes the synthesis of polyP from ATP or GTP. Can also use inorganic polyphosphate (polyP) as a donor to convert ADP to ATP, but the activity is 10-fold higher in vitro for polyP synthesis than for ATP formation. This is Polyphosphate kinase PPK2B from Corynebacterium glutamicum (strain ATCC 13032 / DSM 20300 / JCM 1318 / BCRC 11384 / CCUG 27702 / LMG 3730 / NBRC 12168 / NCIMB 10025 / NRRL B-2784 / 534).